Consider the following 801-residue polypeptide: Phenylalanine--tRNA ligase beta subunit (801 aa).

The region spanning 39 to 153 (AEGLSKLVVG…EDAVPGESIF (115 aa)) is the tRNA-binding domain. In terms of domain architecture, B5 spans 406–481 (TDDIQVSTSL…RIYGYDKLPT (76 aa)). Residues Asp-459, Asp-465, Glu-468, and Glu-469 each contribute to the Mg(2+) site. Positions 708 to 801 (TKFPAVSRDI…LTEKVGAEVR (94 aa)) constitute an FDX-ACB domain.

This sequence belongs to the phenylalanyl-tRNA synthetase beta subunit family. Type 1 subfamily. Tetramer of two alpha and two beta subunits. Mg(2+) serves as cofactor.

It localises to the cytoplasm. It catalyses the reaction tRNA(Phe) + L-phenylalanine + ATP = L-phenylalanyl-tRNA(Phe) + AMP + diphosphate + H(+). The chain is Phenylalanine--tRNA ligase beta subunit from Streptococcus mutans serotype c (strain ATCC 700610 / UA159).